The following is a 118-amino-acid chain: DNA-binding protein SSO0352 (118 aa).

The protein belongs to the PDCD5 family.

In Saccharolobus solfataricus (strain ATCC 35092 / DSM 1617 / JCM 11322 / P2) (Sulfolobus solfataricus), this protein is DNA-binding protein SSO0352.